A 137-amino-acid polypeptide reads, in one-letter code: Large ribosomal subunit protein uL16 (137 aa).

It belongs to the universal ribosomal protein uL16 family. Part of the 50S ribosomal subunit.

Binds 23S rRNA and is also seen to make contacts with the A and possibly P site tRNAs. The polypeptide is Large ribosomal subunit protein uL16 (Anaplasma phagocytophilum (strain HZ)).